Consider the following 256-residue polypeptide: MNDQRKGSDAEPTTHFGYKNVPESQKAEKVAEVFHSVAAKYDLMNDLLSGGMHRLWKRFAIELSGVRTGNRVLDIAGGTGDLTRKFSNLVGPTGQVVLADINASMLKVGRDRLLDLGVSGNVEFVQADAEKLPFPDNHFDCVTIAFGLRNVTHKEDALRSMLRVLKPGGRLLVLEFSKPTNKLMSKAYDAYSFAFMPLMGKLVTNDSESYRYLAESIRMHPNQETLKSMMVEAGFDRVTYHNMTAGVVALHRGIKP.

S-adenosyl-L-methionine is bound by residues Thr79, Asp100, and 128 to 129 (DA).

This sequence belongs to the class I-like SAM-binding methyltransferase superfamily. MenG/UbiE family.

It carries out the reaction a 2-demethylmenaquinol + S-adenosyl-L-methionine = a menaquinol + S-adenosyl-L-homocysteine + H(+). The enzyme catalyses a 2-methoxy-6-(all-trans-polyprenyl)benzene-1,4-diol + S-adenosyl-L-methionine = a 5-methoxy-2-methyl-3-(all-trans-polyprenyl)benzene-1,4-diol + S-adenosyl-L-homocysteine + H(+). The protein operates within quinol/quinone metabolism; menaquinone biosynthesis; menaquinol from 1,4-dihydroxy-2-naphthoate: step 2/2. Its pathway is cofactor biosynthesis; ubiquinone biosynthesis. Methyltransferase required for the conversion of demethylmenaquinol (DMKH2) to menaquinol (MKH2) and the conversion of 2-polyprenyl-6-methoxy-1,4-benzoquinol (DDMQH2) to 2-polyprenyl-3-methyl-6-methoxy-1,4-benzoquinol (DMQH2). The sequence is that of Ubiquinone/menaquinone biosynthesis C-methyltransferase UbiE from Pseudomonas savastanoi pv. phaseolicola (strain 1448A / Race 6) (Pseudomonas syringae pv. phaseolicola (strain 1448A / Race 6)).